Here is a 317-residue protein sequence, read N- to C-terminus: Secreted frizzled-related protein 5 (317 aa).

The first 29 residues, 1–29 (MRAAAAGGGVRTAALALLLGALHWAPARC), serve as a signal peptide directing secretion. One can recognise an FZ domain in the interval 48-165 (SKPPQCLDIP…PLDNDLCIAV (118 aa)). 8 cysteine pairs are disulfide-bonded: C53–C116, C63–C109, C100–C135, C124–C162, C128–C152, C181–C253, C184–C255, and C198–C303. Residues 181 to 303 (CAQCEMEHSA…AVKFMFSYPC (123 aa)) form the NTR domain.

This sequence belongs to the secreted frizzled-related protein (sFRP) family. In terms of tissue distribution, highly expressed in the retinal pigment epithelium (RPE) and pancreas. Weak expression in heart, liver and muscle.

Its subcellular location is the secreted. In terms of biological role, soluble frizzled-related proteins (sFRPS) function as modulators of Wnt signaling through direct interaction with Wnts. They have a role in regulating cell growth and differentiation in specific cell types. SFRP5 may be involved in determining the polarity of photoreceptor, and perhaps, other cells in the retina. The protein is Secreted frizzled-related protein 5 (SFRP5) of Homo sapiens (Human).